The primary structure comprises 270 residues: Formamidopyrimidine-DNA glycosylase (270 aa).

The active-site Schiff-base intermediate with DNA is the proline 2. The active-site Proton donor is the glutamate 3. Lysine 58 functions as the Proton donor; for beta-elimination activity in the catalytic mechanism. Histidine 91, arginine 110, and arginine 151 together coordinate DNA. The segment at 236 to 270 adopts an FPG-type zinc-finger fold; that stretch reads FVYGRGGEFCKVCGSTLREIRLGQRASVYCPRCQR. Arginine 260 (proton donor; for delta-elimination activity) is an active-site residue.

The protein belongs to the FPG family. As to quaternary structure, monomer. Requires Zn(2+) as cofactor.

The catalysed reaction is Hydrolysis of DNA containing ring-opened 7-methylguanine residues, releasing 2,6-diamino-4-hydroxy-5-(N-methyl)formamidopyrimidine.. It carries out the reaction 2'-deoxyribonucleotide-(2'-deoxyribose 5'-phosphate)-2'-deoxyribonucleotide-DNA = a 3'-end 2'-deoxyribonucleotide-(2,3-dehydro-2,3-deoxyribose 5'-phosphate)-DNA + a 5'-end 5'-phospho-2'-deoxyribonucleoside-DNA + H(+). Its function is as follows. Involved in base excision repair of DNA damaged by oxidation or by mutagenic agents. Acts as a DNA glycosylase that recognizes and removes damaged bases. Has a preference for oxidized purines, such as 7,8-dihydro-8-oxoguanine (8-oxoG). Has AP (apurinic/apyrimidinic) lyase activity and introduces nicks in the DNA strand. Cleaves the DNA backbone by beta-delta elimination to generate a single-strand break at the site of the removed base with both 3'- and 5'-phosphates. In Pseudomonas paraeruginosa (strain DSM 24068 / PA7) (Pseudomonas aeruginosa (strain PA7)), this protein is Formamidopyrimidine-DNA glycosylase.